The sequence spans 294 residues: Store-operated calcium entry regulator STIMATE (294 aa).

The disordered stretch occupies residues methionine 1–serine 22. Topologically, residues methionine 1–glutamate 28 are cytoplasmic. The next 3 helical transmembrane spans lie at serine 29–phenylalanine 49, isoleucine 69–valine 89, and leucine 102–valine 122. The GXXXG motif signature appears at glycine 149–glycine 153. The next 2 helical transmembrane spans lie at alanine 156–leucine 176 and leucine 194–aspartate 214. Residues asparagine 215–valine 294 are Cytoplasmic-facing. The tract at residues leucine 227–serine 268 is disordered. A required for localization in the endoplasmic reticulum region spans residues lysine 241–arginine 246.

Belongs to the STIMATE family. Homooligomer. Interacts with STIM1. Widely expressed.

The protein resides in the endoplasmic reticulum membrane. Acts as a regulator of store-operated Ca(2+) entry (SOCE) at junctional sites that connect the endoplasmic reticulum (ER) and plasma membrane (PM), called ER-plasma membrane (ER-PM) junction or cortical ER. SOCE is a Ca(2+) influx following depletion of intracellular Ca(2+) stores. Acts by interacting with STIM1, promoting STIM1 conformational switch. Involved in STIM1 relocalization to ER-PM junctions. Contributes to the maintenance and reorganization of store-dependent ER-PM junctions. This Homo sapiens (Human) protein is Store-operated calcium entry regulator STIMATE.